A 56-amino-acid polypeptide reads, in one-letter code: 4Fe-4S ferredoxin FdxA (56 aa).

2 consecutive 4Fe-4S ferredoxin-type domains span residues 1-28 (MAYVINEACISCGACEPECPVNAISSGD) and 29-56 (DRYVIDADTCIDCGACAGVCPVDAPVQA). [4Fe-4S] cluster-binding residues include Cys-9, Cys-12, Cys-15, Cys-19, Cys-38, Cys-41, Cys-44, and Cys-48.

Requires [4Fe-4S] cluster as cofactor.

Its function is as follows. Ferredoxins are iron-sulfur proteins that transfer electrons in a wide variety of metabolic reactions. This is 4Fe-4S ferredoxin FdxA from Gottschalkia acidurici (strain ATCC 7906 / DSM 604 / BCRC 14475 / CIP 104303 / KCTC 5404 / NCIMB 10678 / 9a) (Clostridium acidurici).